Consider the following 218-residue polypeptide: ATP phosphoribosyltransferase (218 aa).

The protein belongs to the ATP phosphoribosyltransferase family. Short subfamily. As to quaternary structure, heteromultimer composed of HisG and HisZ subunits.

Its subcellular location is the cytoplasm. It catalyses the reaction 1-(5-phospho-beta-D-ribosyl)-ATP + diphosphate = 5-phospho-alpha-D-ribose 1-diphosphate + ATP. It participates in amino-acid biosynthesis; L-histidine biosynthesis; L-histidine from 5-phospho-alpha-D-ribose 1-diphosphate: step 1/9. Catalyzes the condensation of ATP and 5-phosphoribose 1-diphosphate to form N'-(5'-phosphoribosyl)-ATP (PR-ATP). Has a crucial role in the pathway because the rate of histidine biosynthesis seems to be controlled primarily by regulation of HisG enzymatic activity. This Synechococcus elongatus (strain ATCC 33912 / PCC 7942 / FACHB-805) (Anacystis nidulans R2) protein is ATP phosphoribosyltransferase.